A 145-amino-acid chain; its full sequence is D-aminoacyl-tRNA deacylase (145 aa).

Residues 137 to 138 (GP) carry the Gly-cisPro motif, important for rejection of L-amino acids motif.

Belongs to the DTD family. Homodimer.

It localises to the cytoplasm. The catalysed reaction is glycyl-tRNA(Ala) + H2O = tRNA(Ala) + glycine + H(+). The enzyme catalyses a D-aminoacyl-tRNA + H2O = a tRNA + a D-alpha-amino acid + H(+). In terms of biological role, an aminoacyl-tRNA editing enzyme that deacylates mischarged D-aminoacyl-tRNAs. Also deacylates mischarged glycyl-tRNA(Ala), protecting cells against glycine mischarging by AlaRS. Acts via tRNA-based rather than protein-based catalysis; rejects L-amino acids rather than detecting D-amino acids in the active site. By recycling D-aminoacyl-tRNA to D-amino acids and free tRNA molecules, this enzyme counteracts the toxicity associated with the formation of D-aminoacyl-tRNA entities in vivo and helps enforce protein L-homochirality. The chain is D-aminoacyl-tRNA deacylase from Lactobacillus helveticus (strain DPC 4571).